Reading from the N-terminus, the 376-residue chain is MCQATNGPSRVVTKKHRKFFERHLQLLPSSHQGHDVNRMAIIFYSISGLSIFDVNVSAKYGDHLGWMRKHYIKTVLDDTENTVISGFVGSLVMNIPHATTINLPNTLFALLSMIMLRDYEYFETILDKRSLARFVSKCQRPDRGSFVSCLDYKTNCGSSVDSDDLRFCYIAVAILYICGCRSKEDFDEYIDTEKLLGYIMSQQCYNGAFGAHNEPHSGYTSCALSTLALLSSLEKLSDKFKEDTITWLLHRQVSSHGCMKFESELNASYDQSDDGGFQGRENKFADTCYAFWCLNSLHLLTKDWKMLCQTELVTNYLLDRTQKTLTGGFSKNDEEDADLYHSCLGSAALALIEGKFNGELCIPQEIFNDFSKRCCF.

PFTB repeat units follow at residues 128 to 179 (KRSL…YICG), 192 to 231 (TEKL…ALLS), 259 to 301 (MKFE…HLLT), and 310 to 353 (TELV…ALIE). Geranylgeranyl diphosphate-binding positions include 216–218 (HSG) and 280–283 (RENK). Zn(2+) is bound by residues D286 and C288. 289–292 (YAFW) is a binding site for geranylgeranyl diphosphate. H341 is a binding site for Zn(2+).

It belongs to the protein prenyltransferase subunit beta family. In terms of assembly, heterodimer of an alpha (RAM2) and a beta (CDC43) subunit. Zn(2+) serves as cofactor. It depends on Mg(2+) as a cofactor.

The protein localises to the cytoplasm. It carries out the reaction geranylgeranyl diphosphate + L-cysteinyl-[protein] = S-geranylgeranyl-L-cysteinyl-[protein] + diphosphate. Its function is as follows. Catalyzes the transfer of a geranyl-geranyl moiety from geranyl-geranyl diphosphate to proteins having the C-terminal sequence Cys-Ile-Ile-Leu or Cys-Val-Leu-Leu. Acts, among other substrates, on Rho1 and Rho2 and CDC42 proteins. Participates in a RAS-like C-terminal modification of proteins involved in nuclear division and bud growth. It is involved in bud positioning and cell polarity. The beta subunit is responsible for isoprenoid and peptide-binding. The polypeptide is Geranylgeranyl transferase type-1 subunit beta (CDC43) (Saccharomyces cerevisiae (strain ATCC 204508 / S288c) (Baker's yeast)).